Reading from the N-terminus, the 540-residue chain is Keratin, type II cytoskeletal 73 (540 aa).

Residues 1–131 (MSRQFTYKSG…DPEIQKVRAQ (131 aa)) form a head region. The segment at 132 to 167 (EREQIKVLNNKFASFIDKVRFLEQQNQVLETKWELL) is coil 1A. In terms of domain architecture, IF rod spans 132–445 (EREQIKVLNN…KLLEGEECRM (314 aa)). Positions 168–186 (QQLDLNNCKNNLEPILEGY) are linker 1. Residues 187 to 278 (ISNLRKQLET…CLYEGETAQI (92 aa)) are coil 1B. Residues 279 to 302 (QSHISDTSIILSMDNNRNLDLDSI) form a linker 12 region. Residues 303–441 (IAEVRAQYEE…ATYRKLLEGE (139 aa)) are coil 2. The tail stretch occupies residues 442–540 (ECRMSGEYTN…LSSPTKKTMR (99 aa)). The tract at residues 502 to 540 (SGNCSPRGEARTRLGSASEFRDSQGKTLALSSPTKKTMR) is disordered. Over residues 526-540 (GKTLALSSPTKKTMR) the composition is skewed to polar residues.

Belongs to the intermediate filament family. Heterotetramer of two type I and two type II keratins. Highly expressed in hair follicles from scalp. In hair, it is specifically present in the inner root sheath (IRS) of the hair follicle. Present in the IRS cuticle, but not in Henle or Huxley layers of the IRS. In the IRS cuticle, it is expressed between the lowermost bulb region of the cuticle and the region where Henle cells undergo abrupt terminal differentiation. Detected up to the uppermost cortex region where cuticle cells terminally differentiate (at protein level).

Functionally, has a role in hair formation. Specific component of keratin intermediate filaments in the inner root sheath (IRS) of the hair follicle. The polypeptide is Keratin, type II cytoskeletal 73 (KRT73) (Homo sapiens (Human)).